The primary structure comprises 182 residues: ATP synthase subunit delta (182 aa).

The protein belongs to the ATPase delta chain family. As to quaternary structure, F-type ATPases have 2 components, F(1) - the catalytic core - and F(0) - the membrane proton channel. F(1) has five subunits: alpha(3), beta(3), gamma(1), delta(1), epsilon(1). F(0) has three main subunits: a(1), b(2) and c(10-14). The alpha and beta chains form an alternating ring which encloses part of the gamma chain. F(1) is attached to F(0) by a central stalk formed by the gamma and epsilon chains, while a peripheral stalk is formed by the delta and b chains.

It is found in the cell membrane. In terms of biological role, f(1)F(0) ATP synthase produces ATP from ADP in the presence of a proton or sodium gradient. F-type ATPases consist of two structural domains, F(1) containing the extramembraneous catalytic core and F(0) containing the membrane proton channel, linked together by a central stalk and a peripheral stalk. During catalysis, ATP synthesis in the catalytic domain of F(1) is coupled via a rotary mechanism of the central stalk subunits to proton translocation. Its function is as follows. This protein is part of the stalk that links CF(0) to CF(1). It either transmits conformational changes from CF(0) to CF(1) or is implicated in proton conduction. The protein is ATP synthase subunit delta of Syntrophomonas wolfei subsp. wolfei (strain DSM 2245B / Goettingen).